Reading from the N-terminus, the 361-residue chain is Caffeic acid 3-O-methyltransferase 1 (361 aa).

M128–L134 provides a ligand contact to substrate. Positions A160 to M178 are substrate binding. The S-adenosyl-L-methionine site is built by G206, D229, D249, M250, and K263. H267 serves as the catalytic Proton acceptor.

It belongs to the class I-like SAM-binding methyltransferase superfamily. Cation-independent O-methyltransferase family. COMT subfamily. Homodimer.

The enzyme catalyses (E)-caffeate + S-adenosyl-L-methionine = (E)-ferulate + S-adenosyl-L-homocysteine + H(+). The protein operates within aromatic compound metabolism; phenylpropanoid biosynthesis. In terms of biological role, catalyzes the conversion of caffeic acid to ferulic acid and of 5-hydroxyferulic acid to sinapic acid. The resulting products may subsequently be converted to the corresponding alcohols that are incorporated into lignins. The chain is Caffeic acid 3-O-methyltransferase 1 (COMT1) from Ocimum basilicum (Sweet basil).